A 377-amino-acid chain; its full sequence is Succinyl-diaminopimelate desuccinylase (377 aa).

His-66 provides a ligand contact to Zn(2+). The active site involves Asp-68. Zn(2+) is bound at residue Asp-99. The active-site Proton acceptor is Glu-133. Zn(2+)-binding residues include Glu-134, Glu-162, and His-348.

The protein belongs to the peptidase M20A family. DapE subfamily. As to quaternary structure, homodimer. It depends on Zn(2+) as a cofactor. The cofactor is Co(2+).

The enzyme catalyses N-succinyl-(2S,6S)-2,6-diaminopimelate + H2O = (2S,6S)-2,6-diaminopimelate + succinate. Its pathway is amino-acid biosynthesis; L-lysine biosynthesis via DAP pathway; LL-2,6-diaminopimelate from (S)-tetrahydrodipicolinate (succinylase route): step 3/3. In terms of biological role, catalyzes the hydrolysis of N-succinyl-L,L-diaminopimelic acid (SDAP), forming succinate and LL-2,6-diaminopimelate (DAP), an intermediate involved in the bacterial biosynthesis of lysine and meso-diaminopimelic acid, an essential component of bacterial cell walls. The sequence is that of Succinyl-diaminopimelate desuccinylase from Histophilus somni (strain 129Pt) (Haemophilus somnus).